The chain runs to 643 residues: ATP-dependent RNA helicase DeaD (643 aa).

Positions 6-34 (TTFADLGLKAPILEALTDLGYEKPSPIQA) match the Q motif motif. Positions 37-208 (IPHLLDGRDV…RRFMKEPQEV (172 aa)) constitute a Helicase ATP-binding domain. Residue 50-57 (AQTGSGKT) coordinates ATP. A DEAD box motif is present at residues 156-159 (DEAD). Residues 232-379 (KNEALVRFLE…EVELPNAELL (148 aa)) form the Helicase C-terminal domain. Disordered stretches follow at residues 440–482 (VPPV…KRER) and 557–643 (MNMQ…GGDA). 2 stretches are compositionally biased toward basic and acidic residues: residues 448 to 482 (PRREFRDRDDSFDRRGDRNDRGPRGDREDRPKRER) and 567 to 643 (PRTE…GGDA).

It belongs to the DEAD box helicase family. DeaD/CsdA subfamily.

It localises to the cytoplasm. The catalysed reaction is ATP + H2O = ADP + phosphate + H(+). Its function is as follows. DEAD-box RNA helicase involved in various cellular processes at low temperature, including ribosome biogenesis, mRNA degradation and translation initiation. This is ATP-dependent RNA helicase DeaD from Klebsiella pneumoniae.